Consider the following 359-residue polypeptide: Tropomodulin-1 (359 aa).

The disordered stretch occupies residues 36 to 61 (ELDPDNALLPAGLRQKDQTTKAPTGP). The tract at residues 39-138 (PDNALLPAGL…CDIAAILGMH (100 aa)) is tropomyosin-binding.

The protein belongs to the tropomodulin family. As to quaternary structure, binds to the N-terminus of tropomyosin and to actin. Interacts with FLII.

The protein resides in the cytoplasm. It is found in the cytoskeleton. Blocks the elongation and depolymerization of the actin filaments at the pointed end. The Tmod/TM complex contributes to the formation of the short actin protofilament, which in turn defines the geometry of the membrane skeleton. The sequence is that of Tropomodulin-1 (Tmod1) from Rattus norvegicus (Rat).